The following is a 1544-amino-acid chain: Lysophospholipase NTE1 (1544 aa).

At 1–37 (MSTIEIVSTVAEYTEIHSPVSSKFLLPSARDSSSSIS) the chain is on the cytoplasmic side. A helical membrane pass occupies residues 38-58 (LFSAIFWFWSWLFFKIMNIFL). Residues 59–76 (YYIPNIIVNLFSVNFQIT) lie on the Lumenal side of the membrane. The helical transmembrane segment at 77 to 97 (LSLSSIVITLTGIISFCFLIV) threads the bilayer. Residues 98-1544 (RYKYLTRYSK…RKSLYRRSSI (1447 aa)) are Cytoplasmic-facing. 2 disordered regions span residues 265–312 (RLFS…RNYP) and 424–552 (ESPS…EETE). A compositionally biased stretch (polar residues) spans 275–310 (NPASNPLSPDNTGSKSFDPLSSGNFNDTSLSSSDRN). The span at 425–447 (SPSVSINKTSSSSSSLPKKSTTS) shows a compositional bias: low complexity. Composition is skewed to polar residues over residues 448-458 (LRPLNRNQSSR) and 517-536 (QISS…TTKF). Over residues 537–546 (ENIRDRTFSD) the composition is skewed to basic and acidic residues. A nucleoside 3',5'-cyclic phosphate-binding positions include 681-811 (SFES…LKSL) and 807-960 (KLKS…VANK). The PNPLA domain maps to 1237–1401 (LVLGGGGSRG…LDNLPVMEMK (165 aa)). A GXGXXG motif is present at residues 1241 to 1246 (GGGSRG). The GXSXG motif lies at 1268 to 1272 (GTSIG). Ser1270 functions as the Nucleophile in the catalytic mechanism. Residue Asp1388 is the Proton acceptor of the active site. Residues 1388–1390 (DGG) carry the DGA/G motif.

Belongs to the NTE family.

The protein resides in the endoplasmic reticulum membrane. The catalysed reaction is a 1-acyl-sn-glycero-3-phosphocholine + H2O = sn-glycerol 3-phosphocholine + a fatty acid + H(+). Its activity is regulated as follows. Inhibited by organophosphorus esters. Intracellular phospholipase B that catalyzes the double deacylation of phosphatidylcholine (PC) to glycerophosphocholine (GroPCho). Plays an important role in membrane lipid homeostasis. Responsible for the rapid PC turnover in response to inositol, elevated temperatures, or when choline is present in the growth medium. The polypeptide is Lysophospholipase NTE1 (NTE1) (Debaryomyces hansenii (strain ATCC 36239 / CBS 767 / BCRC 21394 / JCM 1990 / NBRC 0083 / IGC 2968) (Yeast)).